The following is a 355-amino-acid chain: 4-hydroxy-3-methylbut-2-en-1-yl diphosphate synthase (flavodoxin) (355 aa).

[4Fe-4S] cluster is bound by residues cysteine 266, cysteine 269, cysteine 301, and glutamate 308.

This sequence belongs to the IspG family. The cofactor is [4Fe-4S] cluster.

The catalysed reaction is (2E)-4-hydroxy-3-methylbut-2-enyl diphosphate + oxidized [flavodoxin] + H2O + 2 H(+) = 2-C-methyl-D-erythritol 2,4-cyclic diphosphate + reduced [flavodoxin]. It functions in the pathway isoprenoid biosynthesis; isopentenyl diphosphate biosynthesis via DXP pathway; isopentenyl diphosphate from 1-deoxy-D-xylulose 5-phosphate: step 5/6. Converts 2C-methyl-D-erythritol 2,4-cyclodiphosphate (ME-2,4cPP) into 1-hydroxy-2-methyl-2-(E)-butenyl 4-diphosphate. In Caldanaerobacter subterraneus subsp. tengcongensis (strain DSM 15242 / JCM 11007 / NBRC 100824 / MB4) (Thermoanaerobacter tengcongensis), this protein is 4-hydroxy-3-methylbut-2-en-1-yl diphosphate synthase (flavodoxin).